The primary structure comprises 800 residues: Phosphoinositide 3-kinase adapter protein 1 (800 aa).

The TIR domain maps to 8 to 145; sequence GGYDVLILYA…AVKKAISEDS (138 aa). Positions 10–144 are necessary and sufficient to mediate inhibition of NF-kappa-B downstream of activated TLRs; the sequence is YDVLILYASD…EAVKKAISED (135 aa). Positions 185-321 constitute a DBB domain; the sequence is VQPDHIRCGV…NIPASGLHLF (137 aa). Tyrosine 266 is modified (phosphotyrosine). Residues tyrosine 423, tyrosine 448, and tyrosine 463 each carry the phosphotyrosine; by SYK modification. Residues 527-548 form a disordered region; it reads EMASRPPVPVPRPESSSPQPDN. A coiled-coil region spans residues 643-663; it reads QQENLKRLRDSITRRQMEKQK. The segment covering 702-713 has biased composition (basic and acidic residues); that stretch reads PKKELKRGDWKT. The segment at 702-800 is disordered; the sequence is PKKELKRGDW…YPPPVPPRGR (99 aa). Residues 714 to 737 are compositionally biased toward low complexity; sequence ESTSSTTSSASNRSSTRSILSVSS. Positions 749–759 are enriched in polar residues; that stretch reads SEASRSRSPIP. 2 stretches are compositionally biased toward pro residues: residues 767 to 777 and 791 to 800; these read LPLPERPPRVP and YPPPVPPRGR.

As to quaternary structure, homooligomer. Interacts (phosphorylated on tyrosine residues within YXXM motifs) with PIK3R1 (via SH2 domain); required for BCR- and TLR-mediated activation of phosphoinositide 3-kinase. Post-translationally, constitutively phosphorylated. Phosphorylated on tyrosine residues within the YXXM motifs by BTK and SYK. Isoform 1 and isoform 2 are phosphorylated on tyrosine residues, most likely within the YXXM motifs, via CD19 activation.

It localises to the cytoplasm. The protein resides in the cell membrane. Its function is as follows. Signaling adapter that contributes to B-cell development by linking B-cell receptor (BCR) signaling to the phosphoinositide 3-kinase (PI3K)-Akt signaling pathway. Has a complementary role to the BCR coreceptor CD19, coupling BCR and PI3K activation by providing a docking site for the PI3K subunit PIK3R1. Alternatively, links Toll-like receptor (TLR) signaling to PI3K activation, a process preventing excessive inflammatory cytokine production. Also involved in the activation of PI3K in natural killer cells. May be involved in the survival of mature B-cells via activation of REL. This Gallus gallus (Chicken) protein is Phosphoinositide 3-kinase adapter protein 1 (PIK3AP1).